The sequence spans 382 residues: V-type proton ATPase subunit C 1 (382 aa).

Thr-2 bears the N-acetylthreonine mark.

The protein belongs to the V-ATPase C subunit family. V-ATPase is a heteromultimeric enzyme made up of two complexes: the ATP-hydrolytic V1 complex and the proton translocation V0 complex. The V1 complex consists of three catalytic AB heterodimers that form a heterohexamer, three peripheral stalks each consisting of EG heterodimers, one central rotor including subunits D and F, and the regulatory subunits C and H. The proton translocation complex V0 consists of the proton transport subunit a, a ring of proteolipid subunits c9c'', rotary subunit d, subunits e and f, and the accessory subunits ATP6AP1/Ac45 and ATP6AP2/PRR. Expressed in brain (at protein level).

Its subcellular location is the cytoplasmic vesicle. The protein localises to the secretory vesicle. The protein resides in the synaptic vesicle membrane. It is found in the clathrin-coated vesicle membrane. Functionally, subunit of the V1 complex of vacuolar(H+)-ATPase (V-ATPase), a multisubunit enzyme composed of a peripheral complex (V1) that hydrolyzes ATP and a membrane integral complex (V0) that translocates protons. V-ATPase is responsible for acidifying and maintaining the pH of intracellular compartments and in some cell types, is targeted to the plasma membrane, where it is responsible for acidifying the extracellular environment. Subunit C is necessary for the assembly of the catalytic sector of the enzyme and is likely to have a specific function in its catalytic activity. This is V-type proton ATPase subunit C 1 (Atp6v1c1) from Rattus norvegicus (Rat).